The primary structure comprises 191 residues: Thymidine kinase (191 aa).

Residues 9–16 and 85–88 each bind ATP; these read GTMNSGKT and DEAQ. Glu-86 (proton acceptor) is an active-site residue. Positions 143, 146, 180, and 183 each coordinate Zn(2+).

It belongs to the thymidine kinase family. As to quaternary structure, homotetramer.

The protein resides in the cytoplasm. The enzyme catalyses thymidine + ATP = dTMP + ADP + H(+). The chain is Thymidine kinase from Streptococcus gordonii (strain Challis / ATCC 35105 / BCRC 15272 / CH1 / DL1 / V288).